Consider the following 947-residue polypeptide: Bifunctional glutamine synthetase adenylyltransferase/adenylyl-removing enzyme (947 aa).

The interval 1 to 440 (MTPLSSPLSQ…VFNELIGDDE (440 aa)) is adenylyl removase. Residues 450–947 (SEPWREVWQD…ASWRKWLVAV (498 aa)) are adenylyl transferase.

The protein belongs to the GlnE family. Mg(2+) serves as cofactor.

It carries out the reaction [glutamine synthetase]-O(4)-(5'-adenylyl)-L-tyrosine + phosphate = [glutamine synthetase]-L-tyrosine + ADP. It catalyses the reaction [glutamine synthetase]-L-tyrosine + ATP = [glutamine synthetase]-O(4)-(5'-adenylyl)-L-tyrosine + diphosphate. In terms of biological role, involved in the regulation of glutamine synthetase GlnA, a key enzyme in the process to assimilate ammonia. When cellular nitrogen levels are high, the C-terminal adenylyl transferase (AT) inactivates GlnA by covalent transfer of an adenylyl group from ATP to specific tyrosine residue of GlnA, thus reducing its activity. Conversely, when nitrogen levels are low, the N-terminal adenylyl removase (AR) activates GlnA by removing the adenylyl group by phosphorolysis, increasing its activity. The regulatory region of GlnE binds the signal transduction protein PII (GlnB) which indicates the nitrogen status of the cell. This is Bifunctional glutamine synthetase adenylyltransferase/adenylyl-removing enzyme from Salmonella schwarzengrund (strain CVM19633).